A 203-amino-acid polypeptide reads, in one-letter code: Ras-related protein Rab-7a (203 aa).

GTP is bound by residues 15 to 22 (GDSGVGKT), 34 to 40 (SNQYKAT), 63 to 67 (DTAGQ), 125 to 128 (NKID), and 157 to 158 (AK). Residues 37-45 (YKATIGADF) carry the Effector region motif. 2 S-geranylgeranyl cysteine lipidation sites follow: cysteine 202 and cysteine 203.

It belongs to the small GTPase superfamily. Rab family.

The protein localises to the late endosome membrane. It is found in the lysosome membrane. The protein resides in the cytoplasmic vesicle. Its subcellular location is the autophagosome membrane. It localises to the lipid droplet. It catalyses the reaction GTP + H2O = GDP + phosphate + H(+). Functionally, small GTPase which cycles between active GTP-bound and inactive GDP-bound states. In its active state, binds to a variety of effector proteins playing a key role in the regulation of endo-lysosomal trafficking. Governs early-to-late endosomal maturation, microtubule minus-end as well as plus-end directed endosomal migration and positioning, and endosome-lysosome transport through different protein-protein interaction cascades. Involved in lipophagy, a cytosolic lipase-independent autophagic pathway. The sequence is that of Ras-related protein Rab-7a (rab7A) from Dictyostelium discoideum (Social amoeba).